Here is an 89-residue protein sequence, read N- to C-terminus: Small ribosomal subunit protein uS15 (89 aa).

Belongs to the universal ribosomal protein uS15 family. As to quaternary structure, part of the 30S ribosomal subunit. Forms a bridge to the 50S subunit in the 70S ribosome, contacting the 23S rRNA.

In terms of biological role, one of the primary rRNA binding proteins, it binds directly to 16S rRNA where it helps nucleate assembly of the platform of the 30S subunit by binding and bridging several RNA helices of the 16S rRNA. Forms an intersubunit bridge (bridge B4) with the 23S rRNA of the 50S subunit in the ribosome. The chain is Small ribosomal subunit protein uS15 from Yersinia pseudotuberculosis serotype O:1b (strain IP 31758).